Here is an 896-residue protein sequence, read N- to C-terminus: Cytokine receptor common subunit beta (896 aa).

An N-terminal signal peptide occupies residues 1 to 22 (MDQQMALTWGLCYMALVALCWG). Topologically, residues 23-441 (HGVTEAEETV…SEEYTWKTDW (419 aa)) are extracellular. A disulfide bridge links Cys-39 with Cys-49. Asn-62 carries N-linked (GlcNAc...) asparagine glycosylation. Disulfide bonds link Cys-77–Cys-99 and Cys-88–Cys-94. Positions 136 to 243 (PPLPKNVSIS…PEVHWDSQPG (108 aa)) constitute a Fibronectin type-III 1 domain. The N-linked (GlcNAc...) asparagine glycan is linked to Asn-141. The segment covering 220-233 (SPGSSLSGRPSRWS) has biased composition (low complexity). The segment at 220 to 243 (SPGSSLSGRPSRWSPEVHWDSQPG) is disordered. 2 disulfides stabilise this stretch: Cys-253-Cys-263 and Cys-292-Cys-310. A Fibronectin type-III 2 domain is found at 343–439 (QMEPPTLNLT…KWSEEYTWKT (97 aa)). Asn-350 carries N-linked (GlcNAc...) asparagine glycosylation. The short motif at 428-432 (WSKWS) is the WSXWS motif element. The helical transmembrane segment at 442-463 (VMPTLWIVLILVFLILTLLLIL) threads the bilayer. The Cytoplasmic segment spans residues 464 to 896 (RFGCVSVYRT…WDNSQSGKVC (433 aa)). The Box 1 motif motif lies at 477 to 485 (WKEKIPNPS). Disordered stretches follow at residues 543–620 (EDPN…GGSL) and 658–725 (CGSS…TGPL). Polar residues-rich tracts occupy residues 555–571 (PDTTPAASSESTEQLPN) and 658–668 (CGSSLETSGSP). Positions 716 to 725 (PVLTLPTGPL) are enriched in low complexity. Phosphoserine is present on residues Ser-752 and Ser-754. Tyr-765 is modified (phosphotyrosine). The tract at residues 771–810 (SVSQAAKSPPGHPAPPVASSPTVIPGEPREEVGPASPHPE) is disordered.

The protein belongs to the type I cytokine receptor family. Type 4 subfamily. Heterodimer of an alpha and a beta subunit. The beta subunit is common to the IL3, IL5 and GM-CSF receptors. The signaling GM-CSF receptor complex is a dodecamer of two head-to-head hexamers of two alpha, two beta, and two ligand subunits. Interacts with TMEM102; this interaction occurs preferentially in the absence of CSF2. Interacts with FCER1G; this interaction is direct. Interacts with LYN. Post-translationally, may be phosphorylated by LYN.

It is found in the membrane. High affinity receptor for interleukin-3, interleukin-5 and granulocyte-macrophage colony-stimulating factor. The polypeptide is Cytokine receptor common subunit beta (Csf2rb) (Mus musculus (Mouse)).